Consider the following 195-residue polypeptide: Keratin-associated protein 4-3 (195 aa).

A run of 28 repeats spans residues 34–38 (CCRTT), 39–43 (CCRPS), 44–48 (CCISS), 49–53 (CCRPS), 54–58 (CCISS), 59–63 (CCKPS), 64–68 (CCRTT), 69–73 (CCRPS), 74–78 (CCISS), 79–83 (CCRPS), 84–88 (CCISS), 89–93 (CCKPS), 94–98 (CCRTT), 99–103 (CCRPS), 104–108 (CCISS), 109–113 (CCRPS), 114–118 (CCISS), 119–123 (CCKPS), 124–128 (CCQTT), 129–133 (CCRPS), 134–138 (CCISS), 144–148 (CCQPS), 149–153 (CCRPA), 154–158 (CCISS), 159–163 (CCHPS), 164–168 (CCVSS), 179–183 (CCRTT), and 189–193 (CCGSS). Residues 34 to 193 (CCRTTCCRPS…CFHPICCGSS (160 aa)) are 29 X 5 AA repeats of C-C-[GIKRQVH]-[SPT]-[STA].

This sequence belongs to the KRTAP type 4 family. Interacts with hair keratins. In terms of tissue distribution, expressed specifically in the middle/uper portions of the hair cortex. Not detected in the hair matrix or cuticle.

Functionally, in the hair cortex, hair keratin intermediate filaments are embedded in an interfilamentous matrix, consisting of hair keratin-associated proteins (KRTAP), which are essential for the formation of a rigid and resistant hair shaft through their extensive disulfide bond cross-linking with abundant cysteine residues of hair keratins. The matrix proteins include the high-sulfur and high-glycine-tyrosine keratins. The sequence is that of Keratin-associated protein 4-3 (KRTAP4-3) from Homo sapiens (Human).